We begin with the raw amino-acid sequence, 432 residues long: Glutamate-gated chloride channel subunit beta (432 aa).

A signal peptide spans 1 to 18 (MSQYMMVAVAAVVAVAGS). Topologically, residues 19–249 (SQISRRSTGG…MQLTLKRQFS (231 aa)) are extracellular. The N-linked (GlcNAc...) asparagine glycan is linked to Asn52. L-glutamate contacts are provided by Arg69, Arg88, and Ser155. Cys164 and Cys178 are joined by a disulfide. Ser184 is a binding site for L-glutamate. An N-linked (GlcNAc...) asparagine glycan is attached at Asn219. Cys226 and Cys237 are joined by a disulfide. The helical transmembrane segment at 250–272 (YYLVQLYGPTTMIVIVSWVSFWI) threads the bilayer. Residues 273-277 (DMHST) lie on the Cytoplasmic side of the membrane. Residues 278–299 (AGRVALGVTTLLTMTTMQAAIN) form a helical membrane-spanning segment. The Extracellular portion of the chain corresponds to 300–306 (AKLPPVS). The helical transmembrane segment at 307-327 (YVKVVDVWLGACQTFVFGALL) threads the bilayer. The Cytoplasmic portion of the chain corresponds to 328–402 (EYAFVSYQDS…KPDYLPAKID (75 aa)). Residues 403 to 426 (YYARFCVPLGFLAFNAIYWTSCLV) traverse the membrane as a helical segment. The Extracellular segment spans residues 427-432 (MVSRLV).

Belongs to the ligand-gated ion channel (TC 1.A.9) family. Glutamate-gated chloride channel (TC 1.A.9.4) subfamily. As to quaternary structure, pentamer. Expressed in motor neuron commissures at the anterior portion of the worms.

Its subcellular location is the postsynaptic cell membrane. It is found in the cell membrane. In terms of biological role, glutamate-gated chloride channel subunit; channel properties may be modulated by the formation of heteromeric channels. Glutamate binding triggers a rapidly reversible current, while the anti-helmintic drug ivermectin triggers a permanently open channel configuration. The sequence is that of Glutamate-gated chloride channel subunit beta from Haemonchus contortus (Barber pole worm).